Here is a 247-residue protein sequence, read N- to C-terminus: 2,3-bisphosphoglycerate-dependent phosphoglycerate mutase (247 aa).

Residues arginine 8–asparagine 15, threonine 21–glycine 22, arginine 60, glutamate 87–tyrosine 90, lysine 98, arginine 114–arginine 115, and glycine 183–asparagine 184 each bind substrate. Histidine 9 functions as the Tele-phosphohistidine intermediate in the catalytic mechanism. Catalysis depends on glutamate 87, which acts as the Proton donor/acceptor.

Belongs to the phosphoglycerate mutase family. BPG-dependent PGAM subfamily.

The catalysed reaction is (2R)-2-phosphoglycerate = (2R)-3-phosphoglycerate. The protein operates within carbohydrate degradation; glycolysis; pyruvate from D-glyceraldehyde 3-phosphate: step 3/5. Its function is as follows. Catalyzes the interconversion of 2-phosphoglycerate and 3-phosphoglycerate. In Chlorobium phaeobacteroides (strain DSM 266 / SMG 266 / 2430), this protein is 2,3-bisphosphoglycerate-dependent phosphoglycerate mutase.